The following is a 23-amino-acid chain: Paralytic peptide 2 (23 aa).

C7 and C19 are disulfide-bonded.

The protein belongs to the GBP/PSP1/paralytic peptide family. As to expression, hemolymph.

Causes rapid, rigid paralysis when injected into Lepidopteran larvae. The physiological role may be to reduce hemolymph loss following injury and promote wound healing. This chain is Paralytic peptide 2, found in Spodoptera exigua (Beet armyworm).